We begin with the raw amino-acid sequence, 479 residues long: UDP-glycosyltransferase 71B6 (479 aa).

Residues S275, 342–344, 359–367, and 381–384 each bind UDP-alpha-D-glucose; these read AEQ, HGGWNSTLE, and YAEQ.

Belongs to the UDP-glycosyltransferase family.

In terms of biological role, glucosyltransferase that glucosylates the (+) enantiomer of abscisic acid ((+)-ABA). Is not active on structural analogs with alterations to the 8'- and 9'- methyl groups. This Arabidopsis thaliana (Mouse-ear cress) protein is UDP-glycosyltransferase 71B6 (UGT71B6).